The primary structure comprises 81 residues: Large ribosomal subunit protein bL31B (81 aa).

Belongs to the bacterial ribosomal protein bL31 family. Type B subfamily. As to quaternary structure, part of the 50S ribosomal subunit.

The protein is Large ribosomal subunit protein bL31B of Bacillus cereus (strain ATCC 10987 / NRS 248).